The chain runs to 470 residues: Sperm-associated antigen 8 (470 aa).

Polar residues predominate over residues 1–21 (METTESTEGSLSRSCDVQPSS). Disordered regions lie at residues 1-70 (METT…PPAH), 117-178 (SGTC…GQGP), and 302-321 (LTTQPQSPMSSSTTQRDSYQ). Low complexity predominate over residues 27 to 48 (PSEPVPSSSSSPRSTAPAEAPA). A compositionally biased stretch (polar residues) spans 51–60 (SVLTEPSSDS). 2 stretches are compositionally biased toward low complexity: residues 122 to 175 (LGQS…ADPG) and 303 to 316 (TTQPQSPMSSSTTQ). Mn regions lie at residues 312–325 (SSTTQRDSYQLPRH) and 364–378 (ESVTHHDYRVELVRA).

This sequence belongs to the SPAG8 family. In terms of assembly, microtubule inner protein component of sperm flagellar doublet microtubules. Interacts with FHL5 (via second LIM domain). Interacts with RANBP9. As to expression, expressed in testis (at protein level). Not detected in brain, heart, kidney, spleen, liver, lung, thymus and colon (at protein level).

It localises to the cytoplasm. It is found in the nucleus. The protein localises to the cytoplasmic vesicle. Its subcellular location is the secretory vesicle. The protein resides in the acrosome. It localises to the cytoskeleton. It is found in the microtubule organizing center. The protein localises to the spindle. Its subcellular location is the cilium axoneme. The protein resides in the flagellum axoneme. Functionally, microtubule inner protein (MIP) part of the dynein-decorated doublet microtubules (DMTs) in cilia axoneme, which is required for motile cilia beating. Plays a role in spermatogenesis by enhancing the binding of CREM isoform tau to its coactivator FHL5 and increasing the FHL5-regulated transcriptional activation of CREM isoform tau. Involved in the acrosome reaction and in binding of sperm to the zona pellucida. Plays a role in regulation of the cell cycle by controlling progression through the G2/M phase, possibly by delaying the activation of CDK1 which is required for entry into mitosis. May play a role in fertility and microtubule formation through interaction with RANBP9. This Mus musculus (Mouse) protein is Sperm-associated antigen 8.